A 222-amino-acid chain; its full sequence is Pyridoxal phosphate homeostasis protein (222 aa).

Residue Lys-35 is modified to N6-(pyridoxal phosphate)lysine.

Belongs to the pyridoxal phosphate-binding protein YggS/PROSC family.

Its function is as follows. Pyridoxal 5'-phosphate (PLP)-binding protein, which is involved in PLP homeostasis. The sequence is that of Pyridoxal phosphate homeostasis protein from Helicobacter pylori (strain ATCC 700392 / 26695) (Campylobacter pylori).